Here is a 450-residue protein sequence, read N- to C-terminus: Proline--tRNA ligase (450 aa).

Belongs to the class-II aminoacyl-tRNA synthetase family. ProS type 2 subfamily. Homodimer.

It is found in the cytoplasm. It carries out the reaction tRNA(Pro) + L-proline + ATP = L-prolyl-tRNA(Pro) + AMP + diphosphate. Functionally, catalyzes the attachment of proline to tRNA(Pro) in a two-step reaction: proline is first activated by ATP to form Pro-AMP and then transferred to the acceptor end of tRNA(Pro). In Paracoccus denitrificans (strain Pd 1222), this protein is Proline--tRNA ligase.